Here is a 478-residue protein sequence, read N- to C-terminus: Transposase for insertion sequence element IS231C (478 aa).

The protein belongs to the transposase 11 family.

Involved in the transposition of the insertion sequence. The polypeptide is Transposase for insertion sequence element IS231C (Bacillus thuringiensis subsp. berliner).